The primary structure comprises 72 residues: SRY-related protein ADW4 (72 aa).

A DNA-binding region (HMG box) is located at residues 1 to 69 (VKRPMNAFMV…KHMADYPNYK (69 aa)).

It is found in the nucleus. This is SRY-related protein ADW4 from Alligator mississippiensis (American alligator).